An 81-amino-acid polypeptide reads, in one-letter code: Elsinochrome C biosynthesis cluster protein SNOG_08613 (81 aa).

Its function is as follows. Part of the gene cluster that mediates the biosynthesis of elsinochrome C, a perelyenequinone phytotoxin structurally similar to cercosporin. The first step of elsinochrome C biosynthesis is performed by the polyketide synthase elcA which catalyzes the formation of nor-toralactone. The starter unit acyltransferase (SAT) domain of elcA initiates polyketide extension by the selective utilization of acetyl-CoA, which is elongated to the heptaketide in the beta-ketoacyl synthase (KS) domain by successive condensations with six malonyl units introduced by the malonyl acyltransferase (MAT) domain. The product template (PT) domain catalyzes C4-C9 and C2-C11 aldol cyclizations and dehydrations to a trihydroxynaphthalene, which is thought to be delivered to the thioesterase (TE) domain for product release. The bifunctional enzyme elcB then methylates nor-toralactone to toralactone before conducting an unusual oxidative aromatic ring opening. The next step in perylenequinone biosynthesis is an O-methylation at the nascent OH-6 of the elcB product performed by the O-methyltransferase elcD. The oxidative coupling of the two monomeric naphthol units in perylenequinone biosynthesis is catalyzed by the FAD-dependent monooxygenase elcE and the multicopper oxidase elcG. ElcG might catalyze the first intermolecular coupling in a regio- and stereo-selective manner via a phenol radical coupling mechanism and the elcE could forge the second C-C bond intramolecularly via a hydride transfer mechanism. The fasciclin domain-containing protein elcF might also play a role duting this step. The last piece of the puzzle in the biosynthesis of elsinochrome C is the additional annulation by enolate coupling to afford the dihydrobenzo(ghi)perylenequinone system, catalyzed by the FAD-dependent monooxygenase elcH. The sequence is that of Elsinochrome C biosynthesis cluster protein SNOG_08613 from Phaeosphaeria nodorum (strain SN15 / ATCC MYA-4574 / FGSC 10173) (Glume blotch fungus).